The primary structure comprises 893 residues: TBC domain-containing protein kinase-like protein (893 aa).

The Protein kinase domain occupies 1 to 273 (MFPLKDAEMG…PDQLMKDKVF (273 aa)). The region spanning 466–651 (DIPPLMRGLT…HLWDTLLLGN (186 aa)) is the Rab-GAP TBC domain. The interval 710–749 (YRQHAQPPKPSSDSSGGRSSAPYFSAECPDPPKTDLSRES) is disordered. Low complexity predominate over residues 720–729 (SSDSSGGRSS). In terms of domain architecture, Rhodanese spans 790 to 889 (SKPKLLVVDI…IKPTGLLTIP (100 aa)).

This sequence belongs to the protein kinase superfamily. In terms of assembly, component of the FERRY complex composed of five subunits, TBCK, PPP1R21, FERRY3, CRYZL1 and GATD1 with a ratio of 1:2:1:2:4, respectively.

The protein localises to the cytoplasm. Its subcellular location is the cytoskeleton. It localises to the spindle. The protein resides in the midbody. It is found in the early endosome. Component of the FERRY complex (Five-subunit Endosomal Rab5 and RNA/ribosome intermediary). The FERRY complex directly interacts with mRNAs and RAB5A, and functions as a RAB5A effector involved in the localization and the distribution of specific mRNAs most likely by mediating their endosomal transport. The complex recruits mRNAs and ribosomes to early endosomes through direct mRNA-interaction. Also involved in the modulation of mTOR signaling and expression of mTOR complex components. Involved in the control of actin-cytoskeleton organization. In Homo sapiens (Human), this protein is TBC domain-containing protein kinase-like protein.